A 274-amino-acid polypeptide reads, in one-letter code: MAFLCSSLPSSSSIAIFGDPNTDGSSRSYLSIPSLKLRFRPVAASSHICAPAIDKSTFVISESVSEDELWAAACLRVRTFNELNPSAYNIQDHRRYLAEREFEALKERTSGKREGFTRVACINATLPLSQLSSSFEDLCSACKFSDGIEDRVVVGSLDLNQCRWLPDEIAGTKPEGIGVDFARAYLSNVCVAKELHRNGVGYKLIDKSKRVAGEWGITDMYVHVTVDNEAAKSLYMKSGFEQETAEPAWQARYLNRPQRLLLWLALPTSPIMSM.

The N-terminal 65 residues, 1–65 (MAFLCSSLPS…STFVISESVS (65 aa)), are a transit peptide targeting the chloroplast. The 193-residue stretch at 75–267 (LRVRTFNELN…QRLLLWLALP (193 aa)) folds into the N-acetyltransferase domain. Residues 189–191 (VCV), 197–202 (RNGVGY), 228–230 (NEA), and Y235 contribute to the acetyl-CoA site. The Proton donor role is filled by Y235.

This sequence belongs to the acetyltransferase family. GNAT subfamily. As to quaternary structure, oligomer. Autoacetylated. As to expression, expressed in green tissues.

It localises to the plastid. The protein resides in the chloroplast. It carries out the reaction an N-terminal L-alpha-aminoacyl-[protein] + acetyl-CoA = N-terminal N(alpha)-acetyl-L-alpha-aminoacyl-[protein] + CoA + H(+). The enzyme catalyses L-lysyl-[protein] + acetyl-CoA = N(6)-acetyl-L-lysyl-[protein] + CoA + H(+). It catalyses the reaction N-terminal L-alanyl-[protein] + acetyl-CoA = N-terminal N(alpha)-acetyl-L-alanyl-[protein] + CoA + H(+). The catalysed reaction is N-terminal L-seryl-[protein] + acetyl-CoA = N-terminal N(alpha)-acetyl-L-seryl-[protein] + CoA + H(+). It carries out the reaction N-terminal L-threonyl-[protein] + acetyl-CoA = N-terminal N(alpha)-acetyl-L-threonyl-[protein] + CoA + H(+). The enzyme catalyses N-terminal L-methionyl-[protein] + acetyl-CoA = N-terminal N(alpha)-acetyl-L-methionyl-[protein] + CoA + H(+). It catalyses the reaction N-terminal L-prolyl-[protein] + acetyl-CoA = N-terminal N(alpha)-acetyl-L-prolyl-[protein] + CoA + H(+). The catalysed reaction is N-terminal L-valyl-[protein] + acetyl-CoA = N-terminal N(alpha)-acetyl-L-valyl-[protein] + CoA + H(+). Functionally, protein acetyltransferase with dual specificity triggering both N-alpha-acetylation (NTA), with a large spectrum of modified N-termini, including methionine, alanine, serine, threonine and to a lower extent valine and proline as substrates, and epsilon-lysine acetylation (KA). This is GCN5-related N-acetyltransferase 7, chloroplastic from Arabidopsis thaliana (Mouse-ear cress).